Consider the following 420-residue polypeptide: Serine hydroxymethyltransferase (420 aa).

(6S)-5,6,7,8-tetrahydrofolate-binding positions include Leu-121 and 125–127 (GHL). Position 230 is an N6-(pyridoxal phosphate)lysine (Lys-230). Residues Glu-246 and 354–356 (SPF) contribute to the (6S)-5,6,7,8-tetrahydrofolate site.

The protein belongs to the SHMT family. As to quaternary structure, homodimer. It depends on pyridoxal 5'-phosphate as a cofactor.

Its subcellular location is the cytoplasm. It catalyses the reaction (6R)-5,10-methylene-5,6,7,8-tetrahydrofolate + glycine + H2O = (6S)-5,6,7,8-tetrahydrofolate + L-serine. The protein operates within one-carbon metabolism; tetrahydrofolate interconversion. It participates in amino-acid biosynthesis; glycine biosynthesis; glycine from L-serine: step 1/1. In terms of biological role, catalyzes the reversible interconversion of serine and glycine with tetrahydrofolate (THF) serving as the one-carbon carrier. This reaction serves as the major source of one-carbon groups required for the biosynthesis of purines, thymidylate, methionine, and other important biomolecules. Also exhibits THF-independent aldolase activity toward beta-hydroxyamino acids, producing glycine and aldehydes, via a retro-aldol mechanism. In Rickettsia rickettsii (strain Iowa), this protein is Serine hydroxymethyltransferase.